Reading from the N-terminus, the 344-residue chain is Tetraacyldisaccharide 4'-kinase (344 aa).

68–75 is a binding site for ATP; it reads TAGGNGKT.

The protein belongs to the LpxK family.

The catalysed reaction is a lipid A disaccharide + ATP = a lipid IVA + ADP + H(+). It participates in glycolipid biosynthesis; lipid IV(A) biosynthesis; lipid IV(A) from (3R)-3-hydroxytetradecanoyl-[acyl-carrier-protein] and UDP-N-acetyl-alpha-D-glucosamine: step 6/6. Functionally, transfers the gamma-phosphate of ATP to the 4'-position of a tetraacyldisaccharide 1-phosphate intermediate (termed DS-1-P) to form tetraacyldisaccharide 1,4'-bis-phosphate (lipid IVA). The polypeptide is Tetraacyldisaccharide 4'-kinase (Photobacterium profundum (strain SS9)).